Consider the following 147-residue polypeptide: Small ribosomal subunit protein eS10B (147 aa).

The interval 90–147 (THKRQVRPAAPRAGRPEPRERSSAADAGYRRAEKKDDGAAPGGFAPSFRGGFGRPVAA) is disordered. The span at 103-127 (GRPEPRERSSAADAGYRRAEKKDDG) shows a compositional bias: basic and acidic residues.

The protein belongs to the eukaryotic ribosomal protein eS10 family. As to quaternary structure, component of the small ribosomal subunit (SSU). Mature yeast ribosomes consist of a small (40S) and a large (60S) subunit. The 40S small subunit contains 1 molecule of ribosomal RNA (18S rRNA) and at least 33 different proteins. The large 60S subunit contains 3 rRNA molecules (25S, 5.8S and 5S rRNA) and at least 46 different proteins. eS10 interacts with GCN1 (via middle region); this interaction is direct and promotes GCN2 kinase activity.

It is found in the cytoplasm. In terms of biological role, component of the ribosome, a large ribonucleoprotein complex responsible for the synthesis of proteins in the cell. The small ribosomal subunit (SSU) binds messenger RNAs (mRNAs) and translates the encoded message by selecting cognate aminoacyl-transfer RNA (tRNA) molecules. The large subunit (LSU) contains the ribosomal catalytic site termed the peptidyl transferase center (PTC), which catalyzes the formation of peptide bonds, thereby polymerizing the amino acids delivered by tRNAs into a polypeptide chain. The nascent polypeptides leave the ribosome through a tunnel in the LSU and interact with protein factors that function in enzymatic processing, targeting, and the membrane insertion of nascent chains at the exit of the ribosomal tunnel. eS10 plays a role as a positive regulator of the GCN2 kinase activity by stimulating GCN1-mediated GCN2 activation. The sequence is that of Small ribosomal subunit protein eS10B (rps1002) from Schizosaccharomyces pombe (strain 972 / ATCC 24843) (Fission yeast).